The primary structure comprises 127 residues: Fluoride-specific ion channel FluC (127 aa).

Helical transmembrane passes span 4–24, 35–55, 71–91, and 103–123; these read LLLA…MLSM, LGTL…FAWF, TGFC…VFLL, and VLVN…IFSA. The Na(+) site is built by G75 and T78.

Belongs to the fluoride channel Fluc/FEX (TC 1.A.43) family.

Its subcellular location is the cell inner membrane. The enzyme catalyses fluoride(in) = fluoride(out). With respect to regulation, na(+) is not transported, but it plays an essential structural role and its presence is essential for fluoride channel function. Functionally, fluoride-specific ion channel. Important for reducing fluoride concentration in the cell, thus reducing its toxicity. This is Fluoride-specific ion channel FluC from Escherichia fergusonii (strain ATCC 35469 / DSM 13698 / CCUG 18766 / IAM 14443 / JCM 21226 / LMG 7866 / NBRC 102419 / NCTC 12128 / CDC 0568-73).